A 358-amino-acid chain; its full sequence is MGLAAPKNRSKISNDPQNTTWANNTSRFGHRILTSQGWQPGDSLGASDAAHAAHYTVASQSHIRVLLKDDNLGLGAKRGSERAENFGLAGLESILGRLNGKEAEVKKEEERREEIEKRAFVYRKYGMMNFVSGGFLVGDKIKSRDEVKTETQAKVEVKSEPESDGAKEDDRKKKRKRKDRDEAGVEGEEEPKLKRKKKSMDLRDQAKKDIAAESSKDKKGKKSKKDKKAVTSDPEPTSSGVASPASDPEPLTDKARRKAEKKARKEEKRLKKALKKAAKEAAKPMGDVEDLSSESEDESTPSASRPATGTSTPTVSAAGLTFNPRGMHSVRQKWIRSKKSATMDAQAMREIFMIKTPS.

Disordered stretches follow at residues 1–26 and 146–342; these read MGLA…NNTS and EVKT…KSAT. The span at 11–26 shows a compositional bias: polar residues; the sequence is KISNDPQNTTWANNTS. The G-patch domain occupies 25 to 79; the sequence is TSRFGHRILTSQGWQPGDSLGASDAAHAAHYTVASQSHIRVLLKDDNLGLGAKRG. 2 stretches are compositionally biased toward basic and acidic residues: residues 146 to 171 and 199 to 217; these read EVKT…EDDR and SMDL…SSKD. Basic residues predominate over residues 218–227; sequence KKGKKSKKDK. A compositionally biased stretch (acidic residues) spans 287-299; it reads DVEDLSSESEDES. Residues 300-315 are compositionally biased toward polar residues; it reads TPSASRPATGTSTPTV. The span at 328-339 shows a compositional bias: basic residues; the sequence is HSVRQKWIRSKK.

It belongs to the PINX1 family.

The protein localises to the nucleus. It localises to the nucleolus. In terms of biological role, involved in rRNA-processing at A0, A1 and A2 sites and negatively regulates telomerase. The protein is Protein PXR1 (PXR1) of Phaeosphaeria nodorum (strain SN15 / ATCC MYA-4574 / FGSC 10173) (Glume blotch fungus).